The primary structure comprises 1277 residues: DNA repair protein RAD5B (1277 aa).

Residues 271 to 293 (KLEQENDDLFSSGDSDGTSAKRR) are disordered. In terms of domain architecture, Helicase ATP-binding spans 674–871 (PTATQMARGG…YSLLCFLHVE (198 aa)). Position 687 to 694 (687 to 694 (DAMGLGKT)) interacts with ATP. The short motif at 822–825 (DEAH) is the DEAH box element. The RING-type zinc finger occupies 1040–1080 (CPICLESADDPVLTPCAHRMCRECLLTSWRSPSCGLCPICR). One can recognise a Helicase C-terminal domain in the interval 1113–1277 (ELLKCLEKIK…RLEELKMLFR (165 aa)).

This sequence belongs to the SNF2/RAD54 helicase family. RAD16 subfamily.

The protein resides in the nucleus. In terms of biological role, possesses intrinsic ATP-dependent nucleosome-remodeling activity. This activity may be required for DNA repair. Does not seem to be required for DNA repair and regulation of homologous recombination (HR). The chain is DNA repair protein RAD5B from Arabidopsis thaliana (Mouse-ear cress).